The chain runs to 409 residues: Tyrosine--tRNA ligase (409 aa).

Residue tyrosine 35 participates in L-tyrosine binding. Residues 40 to 49 (PTGSSLHVGH) carry the 'HIGH' region motif. Positions 168 and 172 each coordinate L-tyrosine. Positions 228–232 (KMGKT) match the 'KMSKS' region motif. Residue lysine 231 participates in ATP binding. The region spanning 339–404 (IKVTDLFVQV…AGKKRVVRIV (66 aa)) is the S4 RNA-binding domain.

It belongs to the class-I aminoacyl-tRNA synthetase family. TyrS type 1 subfamily. In terms of assembly, homodimer.

Its subcellular location is the cytoplasm. It catalyses the reaction tRNA(Tyr) + L-tyrosine + ATP = L-tyrosyl-tRNA(Tyr) + AMP + diphosphate + H(+). Catalyzes the attachment of tyrosine to tRNA(Tyr) in a two-step reaction: tyrosine is first activated by ATP to form Tyr-AMP and then transferred to the acceptor end of tRNA(Tyr). In Treponema pallidum (strain Nichols), this protein is Tyrosine--tRNA ligase.